The following is a 325-amino-acid chain: DNA-directed RNA polymerase subunit alpha (325 aa).

The interval 1–231 is alpha N-terminal domain (alpha-NTD); it reads MQNSLLKPRI…DQLNVFAALE (231 aa). The tract at residues 246–325 is alpha C-terminal domain (alpha-CTD); that stretch reads VDPILLRPVD…ENWPPAGLEK (80 aa).

This sequence belongs to the RNA polymerase alpha chain family. As to quaternary structure, homodimer. The RNAP catalytic core consists of 2 alpha, 1 beta, 1 beta' and 1 omega subunit. When a sigma factor is associated with the core the holoenzyme is formed, which can initiate transcription.

The enzyme catalyses RNA(n) + a ribonucleoside 5'-triphosphate = RNA(n+1) + diphosphate. Its function is as follows. DNA-dependent RNA polymerase catalyzes the transcription of DNA into RNA using the four ribonucleoside triphosphates as substrates. This is DNA-directed RNA polymerase subunit alpha from Herminiimonas arsenicoxydans.